The sequence spans 399 residues: Phosphoglycerate kinase (399 aa).

Residues 22 to 24 (DFN), arginine 38, 61 to 64 (HLGR), arginine 120, and arginine 153 contribute to the substrate site. Residues lysine 204, glutamate 326, and 352-355 (GGDT) each bind ATP.

The protein belongs to the phosphoglycerate kinase family. In terms of assembly, monomer.

The protein resides in the cytoplasm. The catalysed reaction is (2R)-3-phosphoglycerate + ATP = (2R)-3-phospho-glyceroyl phosphate + ADP. The protein operates within carbohydrate degradation; glycolysis; pyruvate from D-glyceraldehyde 3-phosphate: step 2/5. The chain is Phosphoglycerate kinase from Pelobacter propionicus (strain DSM 2379 / NBRC 103807 / OttBd1).